The sequence spans 242 residues: DNA repair protein RecO (242 aa).

It belongs to the RecO family. As to quaternary structure, monomer.

Functionally, involved in DNA repair and RecF pathway recombination. The chain is DNA repair protein RecO from Shigella sonnei (strain Ss046).